The sequence spans 363 residues: Outer membrane porin C (363 aa).

The first 21 residues, 1–21, serve as a signal peptide directing secretion; the sequence is MKVKVLSLLVPALLVAGAANA. Residues 174–187 are compositionally biased toward polar residues; that stretch reads NGSASGEDQTNNGR. The interval 174–195 is disordered; the sequence is NGSASGEDQTNNGRTELRQNGD.

It belongs to the Gram-negative porin family. Homotrimer. Probably forms mixed heterotrimers with OmpF; other mixed heterotrimers are also probable.

Its subcellular location is the cell outer membrane. In terms of biological role, forms pores that allow passive diffusion of small molecules across the outer membrane. Its function is as follows. (Microbial infection) Binds CdiA-EC536, probably acts as the outer membrane receptor for toxin CdiA-EC536 with OmpF. This chain is Outer membrane porin C (ompC), found in Enterobacter cloacae subsp. cloacae (strain ATCC 13047 / DSM 30054 / NBRC 13535 / NCTC 10005 / WDCM 00083 / NCDC 279-56).